The primary structure comprises 209 residues: Guanylate kinase (209 aa).

The Guanylate kinase-like domain maps to 10 to 189; the sequence is GLLLVLSAPS…AFSDLRSVVV (180 aa). Residue 17-24 participates in ATP binding; sequence APSGAGKT.

It belongs to the guanylate kinase family.

It localises to the cytoplasm. It carries out the reaction GMP + ATP = GDP + ADP. Functionally, essential for recycling GMP and indirectly, cGMP. The chain is Guanylate kinase from Myxococcus xanthus (strain DK1622).